Reading from the N-terminus, the 469-residue chain is 6-phosphofructo-2-kinase/fructose-2,6-bisphosphatase 4 (469 aa).

The interval 1-249 (MASPRELTQN…YYLMNIHVTP (249 aa)) is 6-phosphofructo-2-kinase. An ATP-binding site is contributed by 46-54 (GLPARGKTY). 2 residues coordinate beta-D-fructose 6-phosphate: arginine 79 and arginine 103. The active site involves aspartate 129. Positions 131 and 137 each coordinate beta-D-fructose 6-phosphate. Residue cysteine 159 is part of the active site. 168–173 (NIVQVK) contributes to the ATP binding site. Residues lysine 173, arginine 194, and tyrosine 198 each coordinate beta-D-fructose 6-phosphate. The segment at 250 to 469 (RSIYLCRHGE…EALVTVPAHQ (220 aa)) is fructose-2,6-bisphosphatase. Arginine 256 provides a ligand contact to beta-D-fructose 2,6-bisphosphate. Catalysis depends on histidine 257, which acts as the Tele-phosphohistidine intermediate. Beta-D-fructose 2,6-bisphosphate is bound by residues asparagine 263, glycine 269, and arginine 306. Glutamate 326 acts as the Proton donor/acceptor in catalysis. Beta-D-fructose 2,6-bisphosphate is bound by residues tyrosine 337, arginine 351, lysine 355, tyrosine 366, glutamine 392, and arginine 396. 348–351 (FALR) contacts ATP. ATP contacts are provided by residues 392–396 (QAVMR) and tyrosine 428. Position 444 is a phosphothreonine; by PKC (threonine 444).

It in the C-terminal section; belongs to the phosphoglycerate mutase family. In terms of assembly, homodimer.

The catalysed reaction is beta-D-fructose 2,6-bisphosphate + H2O = beta-D-fructose 6-phosphate + phosphate. It carries out the reaction beta-D-fructose 6-phosphate + ATP = beta-D-fructose 2,6-bisphosphate + ADP + H(+). Its activity is regulated as follows. The most important regulatory mechanism of these opposing activities is by phosphorylation and dephosphorylation of the enzyme. Its function is as follows. Synthesis and degradation of fructose 2,6-bisphosphate. This chain is 6-phosphofructo-2-kinase/fructose-2,6-bisphosphatase 4 (PFKFB4), found in Macaca fascicularis (Crab-eating macaque).